Here is a 310-residue protein sequence, read N- to C-terminus: Protein LRATD2 (310 aa).

Positions 1 to 76 (MGNQVEKLTH…PPPQPQPYDP (76 aa)) are disordered. Over residues 54–64 (PDGGGLPDGGD) the composition is skewed to gly residues. The segment covering 65–74 (GPPPPQPQPY) has biased composition (pro residues). Residues 122-217 (VEFVSQAQYP…CRYGKREFKI (96 aa)) form the LRAT domain. The interval 274–310 (HPAEPEEGDSNVARTTPPPGRPPAPSSEEEDGEAVAH) is disordered. Positions 289-298 (TPPPGRPPAP) are enriched in pro residues. Residues 300–310 (SEEEDGEAVAH) show a composition bias toward acidic residues.

This sequence belongs to the LRATD family. Expressed in esophageal squamous cell carcinomas.

The sequence is that of Protein LRATD2 from Homo sapiens (Human).